A 466-amino-acid chain; its full sequence is SVGFKAGVKEYKLTYYTPEYEVKDTDILAAFRVTPQPGVPPEEAGAAVAAESSTGTWTTVWTDGLTSLDRYKGRCYHIEPVLGEEDQYICYVAYPLDLFEEGSVTNMFTSIVGNVFGFKALRALRLEDLRIPIAYVKTFEGPPHGIQVERDKLNKYGRPLLGCTIKPKLGLSAKNYGRAVYECLRGGLDFTKDDENVNSQPFMRWRDRFLFCAEAIYKAQAETGEIKGHYLNATAGTCEEMMKRAVCARELGVPIVMHDYLTGGFTANTSLAHYCRDNGLLLHIHRAMHAVIDRQKNHGMHFRVLAKALRMSGGDHIHAGTVVGKLEGERDITLGFVDLLRDDFIEKDRSRGIYFTQDWVSMPGVLPVASGGIHVWHMPALTEIFGDDSVLQFGGGTLGHPWGNAPGAVANRVALEACVQARNEGRDLAREGNEIIREASKWSPELAAACEVWKAIKFEFDAVDNL.

Residue Lys5 is modified to N6,N6,N6-trimethyllysine. Residues Asn114 and Thr164 each coordinate substrate. The Proton acceptor role is filled by Lys166. Lys168 lines the substrate pocket. Mg(2+) contacts are provided by Lys192, Asp194, and Glu195. Lys192 bears the N6-carboxylysine mark. Residue His285 is the Proton acceptor of the active site. Substrate-binding residues include Arg286, His318, and Ser370.

Belongs to the RuBisCO large chain family. Type I subfamily. As to quaternary structure, heterohexadecamer of 8 large chains and 8 small chains; disulfide-linked. The disulfide link is formed within the large subunit homodimers. The cofactor is Mg(2+). The disulfide bond which can form in the large chain dimeric partners within the hexadecamer appears to be associated with oxidative stress and protein turnover.

The protein resides in the plastid. Its subcellular location is the chloroplast. It catalyses the reaction 2 (2R)-3-phosphoglycerate + 2 H(+) = D-ribulose 1,5-bisphosphate + CO2 + H2O. The enzyme catalyses D-ribulose 1,5-bisphosphate + O2 = 2-phosphoglycolate + (2R)-3-phosphoglycerate + 2 H(+). Functionally, ruBisCO catalyzes two reactions: the carboxylation of D-ribulose 1,5-bisphosphate, the primary event in carbon dioxide fixation, as well as the oxidative fragmentation of the pentose substrate in the photorespiration process. Both reactions occur simultaneously and in competition at the same active site. This is Ribulose bisphosphate carboxylase large chain from Thespesia populnea (Portia tree).